A 455-amino-acid polypeptide reads, in one-letter code: Peroxisomal membrane protein PEX3 (455 aa).

The segment covering 113–125 (TVLSDDFSTSQEG) has biased composition (polar residues). The segment at 113–135 (TVLSDDFSTSQEGAISEDTNKPP) is disordered. The helical transmembrane segment at 155–171 (FLTLIYCESLLIVFLHL) threads the bilayer.

This sequence belongs to the peroxin-3 family. Component of the peroxisomal docking complex, composed of at least PEX3, PEX13, PEX14 and PEX17. Component of the peroxisomal translocation complex, composed of at least PEX3, PEX2, PEX10 and PEX12. Interacts with PEX19. Interacts with the pexophagy receptor ATG30.

The protein resides in the peroxisome membrane. Its function is as follows. Peroxisomal membrane protein required for peroxisome biosynthesis. Shared component of both the peroxisomal docking complex and the peroxisomal translocation complex. The two types of peroxisomal matrix targeting signals, PTS1 and PTS2, are first recognized in the cytosol by their receptors PEX5 and PEX7, respectively, which then carry the cargo to the peroxisomal membrane. The peroxisomal targeting signal (PTS) receptor-cargo complexes interact with peroxisomal membrane protein (PMP) components of the docking complex. They have then additional downstream interactions with the translocation complex, leading to the transport of fully folded and oligomerized cargo into the peroxisome matrix. PEX3 acts as an anchoring site for PEX19 on the peroxisomal membrane and thus plays a crucial role in the assembly of the peroxisomal translocation complex. Is also essential for the interaction between the two complexes. Finally. PEX3 activates selective autophagy of peroxisomes (pexophagy) via interaction with the pexophagy receptor ATG30. This chain is Peroxisomal membrane protein PEX3, found in Komagataella phaffii (strain GS115 / ATCC 20864) (Yeast).